Here is a 565-residue protein sequence, read N- to C-terminus: NAD-dependent malic enzyme (565 aa).

Residue Tyr104 is the Proton donor of the active site. An NAD(+)-binding site is contributed by Arg157. Residue Lys175 is the Proton acceptor of the active site. 3 residues coordinate a divalent metal cation: Glu246, Asp247, and Asp270. Residues Asp270 and Asn418 each contribute to the NAD(+) site.

It belongs to the malic enzymes family. In terms of assembly, homotetramer. Mg(2+) is required as a cofactor. Mn(2+) serves as cofactor.

The enzyme catalyses (S)-malate + NAD(+) = pyruvate + CO2 + NADH. It catalyses the reaction oxaloacetate + H(+) = pyruvate + CO2. In Salmonella arizonae (strain ATCC BAA-731 / CDC346-86 / RSK2980), this protein is NAD-dependent malic enzyme.